We begin with the raw amino-acid sequence, 237 residues long: Large ribosomal subunit protein uL1 (237 aa).

Belongs to the universal ribosomal protein uL1 family. In terms of assembly, part of the 50S ribosomal subunit.

Its function is as follows. Binds directly to 23S rRNA. The L1 stalk is quite mobile in the ribosome, and is involved in E site tRNA release. Functionally, protein L1 is also a translational repressor protein, it controls the translation of the L11 operon by binding to its mRNA. The protein is Large ribosomal subunit protein uL1 of Nocardia farcinica (strain IFM 10152).